The chain runs to 630 residues: MGILDKVSSPADLKGLDADQLEQLAAEIREFLIQKVSATGGHLGPNLGVVELTIAMHRVFDSPSDPLIFDTGHQSYVHKILTGRRDLFDTLRQKDGLSGYPDRAESPHDWTESSHASASLSYADGLAKAFELTGQVHRHVVALVGDGALTGGMTWEALNNIAAAKNRSLVVVVNDNGRSYSPTIGGLAENLAALRLQPMYDRVMDTGKNALGRMGWVGDRAFQVIHGLKEGVKHTVIPHEMFPELGLKYIGPVDGHDLKQVENALRYAKDYGGPVIVHTVTQKGKGFDPAEQDEADQMHSTGVIDPITGESMAKKTEGAISWTKVFSNHLIDIANDREDIVAITAAMAGPTGLADFAKVHPSRTYDVGIAEQHAVTSAAGLALGGLHPVVAVYSTFLNRAFDQLLMDVALLKLGVTLVLDRAGITGSDGASHNGMWDLSITGIVPGIHVAAPRDARTLELALDRAVAVDDAPTVVRFPKGDAPAGIPAVREEDDYDVLFEQSGDKSEGRVLIVSFGALSKQALGAAQALCDANFSATVVDPHWVVPTADSLLEFARGFDLIVTIEDNGVHGGAGSRLHYDLSQAGIDVPVRNLGVPQEFLAHGSRGEVLEDLGLDAETVARTVVGYAEKL.

Thiamine diphosphate-binding positions include histidine 73 and 114 to 116; that span reads SHA. Aspartate 146 is a Mg(2+) binding site. Thiamine diphosphate is bound by residues 147–148, asparagine 176, phenylalanine 287, and glutamate 371; that span reads GA. Asparagine 176 contributes to the Mg(2+) binding site.

This sequence belongs to the transketolase family. DXPS subfamily. Homodimer. Mg(2+) is required as a cofactor. Thiamine diphosphate serves as cofactor.

It catalyses the reaction D-glyceraldehyde 3-phosphate + pyruvate + H(+) = 1-deoxy-D-xylulose 5-phosphate + CO2. It functions in the pathway metabolic intermediate biosynthesis; 1-deoxy-D-xylulose 5-phosphate biosynthesis; 1-deoxy-D-xylulose 5-phosphate from D-glyceraldehyde 3-phosphate and pyruvate: step 1/1. Its function is as follows. Catalyzes the acyloin condensation reaction between C atoms 2 and 3 of pyruvate and glyceraldehyde 3-phosphate to yield 1-deoxy-D-xylulose-5-phosphate (DXP). This Corynebacterium jeikeium (strain K411) protein is 1-deoxy-D-xylulose-5-phosphate synthase.